We begin with the raw amino-acid sequence, 89 residues long: Small ribosomal subunit protein uS15 (89 aa).

Positions 1–11 are enriched in basic and acidic residues; sequence MSITAERKAEV. A disordered region spans residues 1 to 24; it reads MSITAERKAEVIKTSATKAGDTGS.

The protein belongs to the universal ribosomal protein uS15 family. Part of the 30S ribosomal subunit. Forms a bridge to the 50S subunit in the 70S ribosome, contacting the 23S rRNA.

In terms of biological role, one of the primary rRNA binding proteins, it binds directly to 16S rRNA where it helps nucleate assembly of the platform of the 30S subunit by binding and bridging several RNA helices of the 16S rRNA. Its function is as follows. Forms an intersubunit bridge (bridge B4) with the 23S rRNA of the 50S subunit in the ribosome. The sequence is that of Small ribosomal subunit protein uS15 from Rhodopseudomonas palustris (strain TIE-1).